A 218-amino-acid chain; its full sequence is Phosphoribosylformylglycinamidine synthase subunit PurQ (218 aa).

The Glutamine amidotransferase type-1 domain maps to 2–218 (TIGIVVFPGS…IKILQALLSN (217 aa)). Cys86 (nucleophile) is an active-site residue. Residues His194 and Glu196 contribute to the active site.

Part of the FGAM synthase complex composed of 1 PurL, 1 PurQ and 2 PurS subunits.

The protein resides in the cytoplasm. The catalysed reaction is N(2)-formyl-N(1)-(5-phospho-beta-D-ribosyl)glycinamide + L-glutamine + ATP + H2O = 2-formamido-N(1)-(5-O-phospho-beta-D-ribosyl)acetamidine + L-glutamate + ADP + phosphate + H(+). The enzyme catalyses L-glutamine + H2O = L-glutamate + NH4(+). It functions in the pathway purine metabolism; IMP biosynthesis via de novo pathway; 5-amino-1-(5-phospho-D-ribosyl)imidazole from N(2)-formyl-N(1)-(5-phospho-D-ribosyl)glycinamide: step 1/2. Functionally, part of the phosphoribosylformylglycinamidine synthase complex involved in the purines biosynthetic pathway. Catalyzes the ATP-dependent conversion of formylglycinamide ribonucleotide (FGAR) and glutamine to yield formylglycinamidine ribonucleotide (FGAM) and glutamate. The FGAM synthase complex is composed of three subunits. PurQ produces an ammonia molecule by converting glutamine to glutamate. PurL transfers the ammonia molecule to FGAR to form FGAM in an ATP-dependent manner. PurS interacts with PurQ and PurL and is thought to assist in the transfer of the ammonia molecule from PurQ to PurL. This chain is Phosphoribosylformylglycinamidine synthase subunit PurQ, found in Prochlorococcus marinus (strain SARG / CCMP1375 / SS120).